Here is a 323-residue protein sequence, read N- to C-terminus: tRNA dimethylallyltransferase (323 aa).

12 to 19 contributes to the ATP binding site; sequence GPTAAGKT. 14 to 19 provides a ligand contact to substrate; the sequence is TAAGKT. Interaction with substrate tRNA regions lie at residues 37–40 and 161–165; these read DSAL and QRLIR.

This sequence belongs to the IPP transferase family. As to quaternary structure, monomer. Mg(2+) is required as a cofactor.

It carries out the reaction adenosine(37) in tRNA + dimethylallyl diphosphate = N(6)-dimethylallyladenosine(37) in tRNA + diphosphate. Its function is as follows. Catalyzes the transfer of a dimethylallyl group onto the adenine at position 37 in tRNAs that read codons beginning with uridine, leading to the formation of N6-(dimethylallyl)adenosine (i(6)A). The polypeptide is tRNA dimethylallyltransferase (Pseudomonas syringae pv. syringae (strain B728a)).